We begin with the raw amino-acid sequence, 176 residues long: MTTIVSVRRNGKVVMGGDGQVSLGNTVMKGNAKKVRRLYNGQVIAGFAGATADAFTLFERFEAQLQKHSGHLVRAAVELAKEWRTDRSLSRLEAMLAVANKDASLIITGNGDVVEPEDGLIAMGSGGGYAQAAARALLNKTDLSAREITEAALNIAGDICVFTNHNLTIEEQDLAE.

The active site involves Thr-2. 3 residues coordinate Na(+): Gly-157, Cys-160, and Thr-163.

The protein belongs to the peptidase T1B family. HslV subfamily. In terms of assembly, a double ring-shaped homohexamer of HslV is capped on each side by a ring-shaped HslU homohexamer. The assembly of the HslU/HslV complex is dependent on binding of ATP.

It is found in the cytoplasm. It carries out the reaction ATP-dependent cleavage of peptide bonds with broad specificity.. With respect to regulation, allosterically activated by HslU binding. Protease subunit of a proteasome-like degradation complex believed to be a general protein degrading machinery. This is ATP-dependent protease subunit HslV from Pseudomonas entomophila (strain L48).